A 569-amino-acid chain; its full sequence is 5'-AMP-activated protein kinase subunit gamma-2 (569 aa).

The tract at residues 1-222 (MGSAVMDTKK…TRPPLASPTH (222 aa)) is disordered. Phosphoserine is present on residues Ser-65, Ser-71, Ser-73, Ser-90, Ser-138, Ser-143, Ser-161, and Ser-162. Positions 156–167 (TSGLSSSPSTPT) are enriched in low complexity. Thr-165 carries the phosphothreonine modification. Residues 179 to 189 (SYKHEPERLEN) are compositionally biased toward basic and acidic residues. Polar residues predominate over residues 192-212 (YASSSPPDTGQRFCPSSFQSP). At Ser-196 the chain carries Phosphoserine. CBS domains follow at residues 275 to 335 (PTSS…KSPM), 357 to 415 (TFKP…MSDM), and 430 to 492 (IGTY…NLDI). Residues Arg-302, 317–322 (MLTITD), Val-362, 383–384 (HR), and Lys-402 contribute to the ADP site. AMP-binding positions include Arg-302, 317 to 322 (MLTITD), Val-362, His-383, 383 to 384 (HR), Lys-402, Thr-432, Ala-437, 458 to 459 (SA), 474 to 477 (SKFD), Arg-501, His-530, 530 to 531 (HR), and 546 to 549 (SLSD). Residues Arg-302, 317-322 (MLTITD), Val-362, 383-384 (HR), Arg-384, and Lys-402 each bind ATP. An AMPK pseudosubstrate motif is present at residues 370–391 (LFDAVYSLIKNKIHRLPVIDPI). ADP contacts are provided by residues 474–477 (SKFD), Arg-501, and 530–531 (HR). Residues 474–477 (SKFD), Arg-501, and 530–531 (HR) contribute to the ATP site. One can recognise a CBS 4 domain in the interval 504 to 562 (YFEGVVKCNKLEILETIVDRIVRAEVHRLVVVNEADSIVGIISLSDILQALILTPAGAK).

Belongs to the 5'-AMP-activated protein kinase gamma subunit family. AMPK is a heterotrimer of an alpha catalytic subunit (PRKAA1 or PRKAA2), a beta (PRKAB1 or PRKAB2) and a gamma non-catalytic subunits (PRKAG1, PRKAG2 or PRKAG3). Interacts with FNIP1 and FNIP2. Post-translationally, phosphorylated by ULK1; leading to negatively regulate AMPK activity and suggesting the existence of a regulatory feedback loop between ULK1 and AMPK. Glycosylated; O-GlcNAcylated by OGT, promoting the AMP-activated protein kinase (AMPK) activity. Isoform B is ubiquitously expressed except in liver and thymus. The highest level is detected in heart with abundant expression in placenta and testis.

AMP/ATP-binding subunit of AMP-activated protein kinase (AMPK), an energy sensor protein kinase that plays a key role in regulating cellular energy metabolism. In response to reduction of intracellular ATP levels, AMPK activates energy-producing pathways and inhibits energy-consuming processes: inhibits protein, carbohydrate and lipid biosynthesis, as well as cell growth and proliferation. AMPK acts via direct phosphorylation of metabolic enzymes, and by longer-term effects via phosphorylation of transcription regulators. Also acts as a regulator of cellular polarity by remodeling the actin cytoskeleton; probably by indirectly activating myosin. Gamma non-catalytic subunit mediates binding to AMP, ADP and ATP, leading to activate or inhibit AMPK: AMP-binding results in allosteric activation of alpha catalytic subunit (PRKAA1 or PRKAA2) both by inducing phosphorylation and preventing dephosphorylation of catalytic subunits. ADP also stimulates phosphorylation, without stimulating already phosphorylated catalytic subunit. ATP promotes dephosphorylation of catalytic subunit, rendering the AMPK enzyme inactive. The protein is 5'-AMP-activated protein kinase subunit gamma-2 (PRKAG2) of Homo sapiens (Human).